Reading from the N-terminus, the 649-residue chain is Probable ADP-ribosylation factor GTPase-activating protein AGD14 (649 aa).

Positions 12–130 (EKIIRGLMKL…KYAGANDADK (119 aa)) constitute an Arf-GAP domain. Residues 27–50 (CINCNSLGPQYVCTTFWTFVCMAC) form a C4-type zinc finger. 4 disordered regions span residues 124 to 159 (GANDADKPSKDSQDHVSSEDMTRRANSYHSYSQSPP), 209 to 279 (FSNE…VRSV), 294 to 316 (LGEAVSESRQNTGSQQGKTSNHV), and 366 to 391 (FTPANSFAGNLGQQPTSRPSELSAPK). Over residues 127–146 (DADKPSKDSQDHVSSEDMTR) the composition is skewed to basic and acidic residues. Positions 150 to 159 (SYHSYSQSPP) are enriched in low complexity. 4 stretches are compositionally biased toward polar residues: residues 248–257 (PQFQHSNAPP), 269–279 (RTTSSGSVRSV), 300–315 (ESRQNTGSQQGKTSNH), and 366–385 (FTPANSFAGNLGQQPTSRPS).

GTPase-activating protein (GAP) for ADP ribosylation factor (ARF). The protein is Probable ADP-ribosylation factor GTPase-activating protein AGD14 (AGD14) of Arabidopsis thaliana (Mouse-ear cress).